Here is a 134-residue protein sequence, read N- to C-terminus: Secretin (134 aa).

An N-terminal signal peptide occupies residues 1-21 (MATRALLLLLLLPPLLLLAGC). Positions 22 to 31 (AARPAPPRAP) are excised as a propeptide. Valine amide is present on Val-59. Phosphoserine is present on Ser-63. The propeptide occupies 63–134 (SQQDPENNTA…PAAEGSPMPP (72 aa)).

Belongs to the glucagon family.

It localises to the secreted. Hormone involved in different processes, such as regulation of the pH of the duodenal content, food intake and water homeostasis. Exerts its biological effects by binding to secretin receptor (SCTR), a G-protein coupled receptor expressed in the basolateral domain of several cells. Acts as a key gastrointestinal hormone by regulating the pH of the duodenal content. Secreted by S cells of the duodenum in the crypts of Lieberkuehn and regulates the pH of the duodenum by (1) inhibiting the secretion of gastric acid from the parietal cells of the stomach and (2) stimulating the production of bicarbonate (NaHCO(3)) from the ductal cells of the pancreas. Production of bicarbonate is essential to neutralize the pH and ensure no damage is done to the small intestine by the gastric acid. In addition to regulating the pH of the duodenal content, plays a central role in diet induced thermogenesis: acts as a non-sympathetic brown fat (BAT) activator mediating prandial thermogenesis, which consequentially induces satiation. Mechanistically, secretin released by the gut after a meal binds to secretin receptor (SCTR) in brown adipocytes, activating brown fat thermogenesis by stimulating lipolysis, which is sensed in the brain and promotes satiation. Also able to stimulate lipolysis in white adipocytes. Also plays an important role in cellular osmoregulation: released into the systemic circulation in response to hyperosmolality and acts at different levels in the hypothalamus, pituitary and kidney to regulate water homeostasis. Also plays a role in the central nervous system, possibly by acting as a neuropeptide hormone: required for hippocampal synaptic function and neural progenitor cells maintenance. This chain is Secretin, found in Sus scrofa (Pig).